A 57-amino-acid polypeptide reads, in one-letter code: Aspartyl-phosphate phosphatase YnzD (57 aa).

The protein belongs to the spo0E family.

In terms of biological role, aspartyl-phosphate phosphatase which specifically dephosphorylates the sporulation transcription factor Spo0A-P and negatively regulates the sporulation initiation pathway in order to control the proper timing of sporulation. The chain is Aspartyl-phosphate phosphatase YnzD (ynzD) from Bacillus subtilis (strain 168).